Reading from the N-terminus, the 563-residue chain is Protein disulfide isomerase-like 1-4 (563 aa).

Residues 1 to 22 form the signal peptide; that stretch reads MRSRSLLLVALATLLLHASASA. A disordered region spans residues 40–64; that stretch reads NDPDGWLQEGSPDDDDDDDLFHHGQ. Residues 46-180 form the Thioredoxin 1 domain; it reads LQEGSPDDDD…IVSWVNKKLA (135 aa). Residue Asn82 is glycosylated (N-linked (GlcNAc...) asparagine). Active-site nucleophile residues include Cys102 and Cys105. Cys102 and Cys105 are disulfide-bonded. N-linked (GlcNAc...) asparagine glycans are attached at residues Asn185 and Asn315. The region spanning 394–523 is the Thioredoxin 2 domain; sequence FLEEKLTPFY…MYKFIKKHAS (130 aa). Catalysis depends on nucleophile residues Cys444 and Cys447. A disulfide bridge connects residues Cys444 and Cys447. Basic and acidic residues predominate over residues 529 to 542; the sequence is KRPDSSATKTEKDQ. Residues 529-563 form a disordered region; sequence KRPDSSATKTEKDQSTASTNLRGERSSGTNFKDEL. Over residues 543-563 the composition is skewed to polar residues; that stretch reads STASTNLRGERSSGTNFKDEL. Positions 560–563 match the Prevents secretion from ER motif; sequence KDEL.

It belongs to the protein disulfide isomerase family.

Its subcellular location is the endoplasmic reticulum lumen. It carries out the reaction Catalyzes the rearrangement of -S-S- bonds in proteins.. Functionally, acts as a protein-folding catalyst that interacts with nascent polypeptides to catalyze the formation, isomerization, and reduction or oxidation of disulfide bonds. May play a role in storage protein biogenesis. This is Protein disulfide isomerase-like 1-4 (PDIL1-4) from Oryza sativa subsp. japonica (Rice).